A 419-amino-acid polypeptide reads, in one-letter code: UDP-N-acetylglucosamine 1-carboxyvinyltransferase (419 aa).

22–23 (KN) lines the phosphoenolpyruvate pocket. Arginine 91 contacts UDP-N-acetyl-alpha-D-glucosamine. Cysteine 115 (proton donor) is an active-site residue. Cysteine 115 carries the 2-(S-cysteinyl)pyruvic acid O-phosphothioketal modification. UDP-N-acetyl-alpha-D-glucosamine is bound by residues 120-124 (RPVDL), 160-163 (KVSV), aspartate 305, and isoleucine 327.

It belongs to the EPSP synthase family. MurA subfamily.

The protein resides in the cytoplasm. The catalysed reaction is phosphoenolpyruvate + UDP-N-acetyl-alpha-D-glucosamine = UDP-N-acetyl-3-O-(1-carboxyvinyl)-alpha-D-glucosamine + phosphate. Its pathway is cell wall biogenesis; peptidoglycan biosynthesis. Cell wall formation. Adds enolpyruvyl to UDP-N-acetylglucosamine. The protein is UDP-N-acetylglucosamine 1-carboxyvinyltransferase of Serratia proteamaculans (strain 568).